A 151-amino-acid chain; its full sequence is Large ribosomal subunit protein bL9 (151 aa).

It belongs to the bacterial ribosomal protein bL9 family.

Binds to the 23S rRNA. The chain is Large ribosomal subunit protein bL9 from Nitrosomonas europaea (strain ATCC 19718 / CIP 103999 / KCTC 2705 / NBRC 14298).